We begin with the raw amino-acid sequence, 276 residues long: Secretagogin (276 aa).

EF-hand domains are found at residues 12-47, 105-140, 149-184, 197-232, and 240-276; these read LDAA…LLAK, DNSV…LFLH, ELEE…QENF, ERKR…MMEL, and VDLD…KINP. The Ca(2+) site is built by D118, D120, S122, E129, D162, N164, D166, R168, D173, D210, S212, T214, E221, D254, N256, D258, K260, and E265.

As to expression, highly expressed in pancreas, in particular in pancreatic islets and pancreatic beta-cells. Detected in prostate, adrenal gland, small intestine, stomach and thyroid (at protein level).

Its subcellular location is the cytoplasm. It localises to the secreted. It is found in the cytoplasmic vesicle. The protein localises to the secretory vesicle membrane. This is Secretagogin (Scgn) from Rattus norvegicus (Rat).